Reading from the N-terminus, the 69-residue chain is Cytochrome c oxidase subunit 8A, mitochondrial (69 aa).

A mitochondrion-targeting transit peptide spans 1-25 (MSVLTPLLLRGLAGSARRLPVPRAQ). An SIFI-degron motif is present at residues 2–19 (SVLTPLLLRGLAGSARRL). Residues 26 to 36 (IHSKPPREQLG) are Mitochondrial matrix-facing. The chain crosses the membrane as a helical span at residues 37–60 (TMDVAIGITSCFLCFLLPAGWVLS). Residues 61–69 (HLESYKKRE) are Mitochondrial intermembrane-facing.

It belongs to the cytochrome c oxidase VIII family. Component of the cytochrome c oxidase (complex IV, CIV), a multisubunit enzyme composed of 14 subunits. The complex is composed of a catalytic core of 3 subunits MT-CO1, MT-CO2 and MT-CO3, encoded in the mitochondrial DNA, and 11 supernumerary subunits COX4I, COX5A, COX5B, COX6A, COX6B, COX6C, COX7A, COX7B, COX7C, COX8 and NDUFA4, which are encoded in the nuclear genome. The complex exists as a monomer or a dimer and forms supercomplexes (SCs) in the inner mitochondrial membrane with NADH-ubiquinone oxidoreductase (complex I, CI) and ubiquinol-cytochrome c oxidoreductase (cytochrome b-c1 complex, complex III, CIII), resulting in different assemblies (supercomplex SCI(1)III(2)IV(1) and megacomplex MCI(2)III(2)IV(2)). In terms of processing, in response to mitochondrial stress, the precursor protein is ubiquitinated by the SIFI complex in the cytoplasm before mitochondrial import, leading to its degradation. Within the SIFI complex, UBR4 initiates ubiquitin chain that are further elongated or branched by KCMF1.

The protein localises to the mitochondrion inner membrane. Its pathway is energy metabolism; oxidative phosphorylation. Functionally, component of the cytochrome c oxidase, the last enzyme in the mitochondrial electron transport chain which drives oxidative phosphorylation. The respiratory chain contains 3 multisubunit complexes succinate dehydrogenase (complex II, CII), ubiquinol-cytochrome c oxidoreductase (cytochrome b-c1 complex, complex III, CIII) and cytochrome c oxidase (complex IV, CIV), that cooperate to transfer electrons derived from NADH and succinate to molecular oxygen, creating an electrochemical gradient over the inner membrane that drives transmembrane transport and the ATP synthase. Cytochrome c oxidase is the component of the respiratory chain that catalyzes the reduction of oxygen to water. Electrons originating from reduced cytochrome c in the intermembrane space (IMS) are transferred via the dinuclear copper A center (CU(A)) of subunit 2 and heme A of subunit 1 to the active site in subunit 1, a binuclear center (BNC) formed by heme A3 and copper B (CU(B)). The BNC reduces molecular oxygen to 2 water molecules using 4 electrons from cytochrome c in the IMS and 4 protons from the mitochondrial matrix. The sequence is that of Cytochrome c oxidase subunit 8A, mitochondrial (COX8A) from Carlito syrichta (Philippine tarsier).